Consider the following 67-residue polypeptide: Ranatuerin-2Vb (67 aa).

Positions 1 to 22 (MFTLKKSFLLLFFLGTITLSLC) are cleaved as a signal peptide. Positions 23-39 (EEERGADDDDGEEEVKR) are excised as a propeptide. An intrachain disulfide couples Cys-62 to Cys-67.

Expressed by the skin glands.

It is found in the secreted. In terms of biological role, antimicrobial peptide. The polypeptide is Ranatuerin-2Vb (Odorrana versabilis (Chinese bamboo leaf odorous frog)).